A 160-amino-acid polypeptide reads, in one-letter code: Putative transcriptional regulator protein YobU (160 aa).

This Bacillus subtilis (strain 168) protein is Putative transcriptional regulator protein YobU (yobU).